The primary structure comprises 276 residues: Probable endonuclease 4 (276 aa).

Zn(2+) is bound by residues His66, His106, Glu141, Asp175, His178, His210, Asp223, His225, and Glu255.

Belongs to the AP endonuclease 2 family. The cofactor is Zn(2+).

The catalysed reaction is Endonucleolytic cleavage to 5'-phosphooligonucleotide end-products.. Endonuclease IV plays a role in DNA repair. It cleaves phosphodiester bonds at apurinic or apyrimidinic (AP) sites, generating a 3'-hydroxyl group and a 5'-terminal sugar phosphate. This is Probable endonuclease 4 from Heliobacterium modesticaldum (strain ATCC 51547 / Ice1).